The primary structure comprises 104 residues: Large ribosomal subunit protein uL24 (104 aa).

This sequence belongs to the universal ribosomal protein uL24 family. Part of the 50S ribosomal subunit.

Its function is as follows. One of two assembly initiator proteins, it binds directly to the 5'-end of the 23S rRNA, where it nucleates assembly of the 50S subunit. Functionally, one of the proteins that surrounds the polypeptide exit tunnel on the outside of the subunit. The protein is Large ribosomal subunit protein uL24 of Pectobacterium atrosepticum (strain SCRI 1043 / ATCC BAA-672) (Erwinia carotovora subsp. atroseptica).